Reading from the N-terminus, the 508-residue chain is Glutamate--cysteine ligase, chloroplastic (508 aa).

A chloroplast-targeting transit peptide spans 1–59 (MTTIFRLASSSSPSLRHDATPHNFHIRKTSISNTFSFSSKNSLSFKRILTSGGSRRFIV). 2 disulfides stabilise this stretch: C172–C392 and C335–C350.

Belongs to the carboxylate-amine ligase family. Glutamate--cysteine ligase type 2 subfamily. As to quaternary structure, homodimer or monomer when oxidized or reduced, respectively. Post-translationally, the Cys-172-Cys-392 disulfide bridge is known to modulate the enzyme activity according to the redox status. The oxidized form constitutes the active enzyme.

The protein resides in the plastid. It localises to the chloroplast. The enzyme catalyses L-cysteine + L-glutamate + ATP = gamma-L-glutamyl-L-cysteine + ADP + phosphate + H(+). The protein operates within sulfur metabolism; glutathione biosynthesis; glutathione from L-cysteine and L-glutamate: step 1/2. The polypeptide is Glutamate--cysteine ligase, chloroplastic (GSH1) (Medicago truncatula (Barrel medic)).